Reading from the N-terminus, the 106-residue chain is 3-oxoacyl-[acyl-carrier-protein] reductase (106 aa).

The protein belongs to the short-chain dehydrogenases/reductases (SDR) family. As to quaternary structure, homotetramer. In terms of tissue distribution, mesocarp.

It is found in the plastid. The protein localises to the chloroplast. The catalysed reaction is a (3R)-hydroxyacyl-[ACP] + NADP(+) = a 3-oxoacyl-[ACP] + NADPH + H(+). It functions in the pathway lipid metabolism; fatty acid biosynthesis. The sequence is that of 3-oxoacyl-[acyl-carrier-protein] reductase from Persea americana (Avocado).